We begin with the raw amino-acid sequence, 699 residues long: Pollen-specific leucine-rich repeat extensin-like protein 4 (699 aa).

The N-terminal stretch at 1 to 39 (MPFYKQPWVFSKVFVLAMAKPPSFGCCFFLLFFSFLSSS) is a signal peptide. N-linked (GlcNAc...) asparagine glycosylation is present at asparagine 106. 9 LRR repeats span residues 133–157 (VTVVAGVDLNGADIAGHLPAELGLM), 158–180 (TDVAMFHLNSNRFCGIIPKSFEK), 182–205 (KLMHEFDVSNNRFVGPFPNVVLSW), 206–229 (PDVKYFDLRFNDFEGQVPPELFKK), 231–251 (LDAIFLNDNRFTSVIPESLGE), 253–275 (PASVVTFANNKFTGCIPKSIGNM), 276–299 (KNLNEIVFMDNDLGGCFPSEIGKL), 301–323 (NVTVFDASKNSFIGRLPTSFVGL), and 324–347 (TSVEEIDISGNKLTGLVPHNICQL). A glycan (N-linked (GlcNAc...) asparagine) is linked at asparagine 301. N-linked (GlcNAc...) asparagine glycosylation occurs at asparagine 352. The interval 411–699 (KCAGGSSTPS…SPPPPMFAGY (289 aa)) is disordered. 4 stretches are compositionally biased toward pro residues: residues 421-466 (KPSP…PVPT), 482-504 (KPSPVPSRPVQKPQPPKESPQPD), 518-659 (PPPA…PPAP), and 690-699 (SPPPPMFAGY). The contains the Ser-Pro(4) repeats stretch occupies residues 517–699 (SPPPAPVNSP…SPPPPMFAGY (183 aa)).

Hydroxylated on proline residues in the S-P-P-P-P repeat. Post-translationally, O-glycosylated on hydroxyprolines. As to expression, expressed in flowers, stamen, pollen, and pollinated carpels.

It is found in the secreted. It localises to the cell wall. In terms of biological role, modulates cell morphogenesis by regulating cell wall formation and assembly, and/or growth polarization. This is Pollen-specific leucine-rich repeat extensin-like protein 4 (PEX4) from Arabidopsis thaliana (Mouse-ear cress).